Consider the following 145-residue polypeptide: RING-H2 finger protein ATL18 (145 aa).

The N-terminal stretch at 1-29 (MISMLFPRSPLCTAAIVFYTCVCIPLGRL) is a signal peptide. The RING-type; atypical zinc-finger motif lies at 62 to 105 (CPICLVEFEAEDAVTHLPRCAHLFHINCIEPWLLRGHLTCPLCR). Residues 125 to 145 (STLYLSIFFFFCIFLHLLGYL) form a helical membrane-spanning segment.

This sequence belongs to the RING-type zinc finger family. ATL subfamily.

The protein localises to the membrane. The catalysed reaction is S-ubiquitinyl-[E2 ubiquitin-conjugating enzyme]-L-cysteine + [acceptor protein]-L-lysine = [E2 ubiquitin-conjugating enzyme]-L-cysteine + N(6)-ubiquitinyl-[acceptor protein]-L-lysine.. The protein operates within protein modification; protein ubiquitination. The chain is RING-H2 finger protein ATL18 (ATL18) from Arabidopsis thaliana (Mouse-ear cress).